The following is a 1481-amino-acid chain: Coiled-coil domain-containing protein 88B (1481 aa).

Coiled-coil stretches lie at residues 200-225 (ELVA…RERD) and 258-491 (SHHL…GSQH). Disordered regions lie at residues 430 to 458 (ELQR…QDEV), 494 to 731 (LEEQ…AIPE), and 1331 to 1481 (PRRE…SLSQ). Serine 441 bears the Phosphoserine mark. Polar residues-rich tracts occupy residues 542–557 (ASYS…SQAP) and 568–590 (QMVS…TVET). Position 649 is a phosphoserine (serine 649). Residues 660–695 (TLREPLKDQKALDRELELSKQQKETGRHEQRPKGLE) show a composition bias toward basic and acidic residues. Residues 731–1308 (EEQALRDEVA…KIMDQYRVLE (578 aa)) are a coiled coil. Phosphoserine occurs at positions 1353 and 1384. Over residues 1371–1386 (TGSSSPAPMRRVQSSL) the composition is skewed to polar residues. The segment covering 1453-1472 (LSEHEADDTREAFQEQKPEK) has biased composition (basic and acidic residues).

It belongs to the CCDC88 family. As to quaternary structure, homodimer. Interacts with DOCK8. Interacts (via C-terminus) with intact microtubules. Interacts with dynein-dynactin motor complex. Interacts (via C-terminus) with HSPA5. In terms of tissue distribution, abundantly expressed in immune cells, including both CD4(+) and CD8(+) T-cells and in myeloid cells (at protein level). Expressed in endothelium (at protein level). Expressed specifically in spleen, bone marrow, lymph nodes and thymus. Expressed in liver and heart.

It localises to the membrane. It is found in the cytoplasm. The protein resides in the cytoskeleton. The protein localises to the microtubule organizing center. Its subcellular location is the endoplasmic reticulum. It localises to the golgi apparatus. In terms of biological role, acts as a positive regulator of T-cell maturation and inflammatory function. Required for several functions of T-cells in both the CD4(+) and the CD8(+) compartments and this includes expression of cell surface markers of activation, proliferation, and cytokine production in response to specific or non-specific stimulation and during the course of infection with the mouse malaria parasite Plasmodium berghei. Enhances NK cell cytotoxicity by positively regulating polarization of microtubule-organizing center (MTOC) to cytotoxic synapse, lytic granule transport along microtubules, and dynein-mediated clustering to MTOC. Interacts with HSPA5 and stabilizes the interaction between HSPA5 and ERN1, leading to suppression of ERN1-induced JNK activation and endoplasmic reticulum stress-induced apoptosis. The protein is Coiled-coil domain-containing protein 88B (Ccdc88b) of Mus musculus (Mouse).